A 98-amino-acid chain; its full sequence is NADH-ubiquinone oxidoreductase chain 4L (98 aa).

The next 3 membrane-spanning stretches (helical) occupy residues 2–22 (PSISTNIVLAFITALLGMLIF), 29–49 (SLLCLEGMMLSMFILSTLTIL), and 61–81 (ILLLVFAACEAAVGLALLVTV).

Belongs to the complex I subunit 4L family. As to quaternary structure, core subunit of respiratory chain NADH dehydrogenase (Complex I) which is composed of 45 different subunits.

The protein resides in the mitochondrion inner membrane. The catalysed reaction is a ubiquinone + NADH + 5 H(+)(in) = a ubiquinol + NAD(+) + 4 H(+)(out). Core subunit of the mitochondrial membrane respiratory chain NADH dehydrogenase (Complex I) which catalyzes electron transfer from NADH through the respiratory chain, using ubiquinone as an electron acceptor. Part of the enzyme membrane arm which is embedded in the lipid bilayer and involved in proton translocation. The sequence is that of NADH-ubiquinone oxidoreductase chain 4L (MT-ND4L) from Eulemur rubriventer (Red-bellied lemur).